We begin with the raw amino-acid sequence, 219 residues long: Elongation factor Ts (219 aa).

The segment at 81-84 is involved in Mg(2+) ion dislocation from EF-Tu; it reads SDFV.

Belongs to the EF-Ts family.

The protein resides in the cytoplasm. Its function is as follows. Associates with the EF-Tu.GDP complex and induces the exchange of GDP to GTP. It remains bound to the aminoacyl-tRNA.EF-Tu.GTP complex up to the GTP hydrolysis stage on the ribosome. This chain is Elongation factor Ts, found in Koribacter versatilis (strain Ellin345).